Reading from the N-terminus, the 152-residue chain is Adrenodoxin-like protein 2, mitochondrial (152 aa).

The N-terminal 29 residues, 1-29, are a transit peptide targeting the mitochondrion; the sequence is MLVINSCRAASRLALRSLNLRSPIATRTF. The 2Fe-2S ferredoxin-type domain maps to 41–146; sequence VNITFVRANG…GLEVHVPSTI (106 aa). Residues Cys-80, Cys-86, Cys-89, and Cys-127 each coordinate [2Fe-2S] cluster.

Belongs to the adrenodoxin/putidaredoxin family. [2Fe-2S] cluster is required as a cofactor.

It is found in the mitochondrion. Required for ecdysteroidogenesis in the prothoracic gland which is necessary for larval to pupal transition. The protein is Adrenodoxin-like protein 2, mitochondrial of Drosophila melanogaster (Fruit fly).